The primary structure comprises 225 residues: Small ribosomal subunit protein uS5 (225 aa).

Residues 57 to 120 form the S5 DRBM domain; the sequence is LEEQVLDVKL…AQAKLSLIKV (64 aa).

It belongs to the universal ribosomal protein uS5 family. As to quaternary structure, part of the 30S ribosomal subunit. Contacts protein S4.

In terms of biological role, with S4 and S12 plays an important role in translational accuracy. This chain is Small ribosomal subunit protein uS5, found in Methanococcus vannielii (strain ATCC 35089 / DSM 1224 / JCM 13029 / OCM 148 / SB).